A 449-amino-acid polypeptide reads, in one-letter code: MASSKLAVIVLAAGMGTRMKSSLPKVMHPLAGRPMVSHLLDTVSGLSPDRMVVVVGPDMELVGKTVAPFPTVIQADRLGTGHAVLQAKAALGQFDGDVLVLYGDTPLITRATLERMLAERRGPRDPAVVVLGFKPQDPGHYGRLVVGAEGLKAIVEYRDATPDQRENPLCNSGVMAIDGNRLWSLIERVDNKNSKGEYYLTDIVALARADGATCTHVEGDEAELLGVNARSELAVAEALVQARLREAAMDNGATLIDPATVWFSWDTKIGRDVTIWPHVVFGPGVTVGDNVEIKGFCHFEGCMVEAGVAAGPFTRLRPGAEIGEGAHIGNFVEVKKATVEAGAKINHLAYVGDARVGAGANVGAGTITCNYDGFNKSFTDIGAGAFIGSNTSLVAPVKVGDGAVVGAGSVITKEVTPGALAVARGSQMELKGWAERFRAQQAAKKAKKD.

The tract at residues 1 to 230 (MASSKLAVIV…EAELLGVNAR (230 aa)) is pyrophosphorylase. UDP-N-acetyl-alpha-D-glucosamine contacts are provided by residues 11–14 (LAAG), K25, Q74, 79–80 (GT), 102–104 (YGD), G142, E156, N171, and N228. D104 serves as a coordination point for Mg(2+). N228 lines the Mg(2+) pocket. The segment at 231–251 (SELAVAEALVQARLREAAMDN) is linker. The N-acetyltransferase stretch occupies residues 252–449 (GATLIDPATV…QQAAKKAKKD (198 aa)). The UDP-N-acetyl-alpha-D-glucosamine site is built by R317 and K335. H347 serves as the catalytic Proton acceptor. 2 residues coordinate UDP-N-acetyl-alpha-D-glucosamine: Y350 and N361. Acetyl-CoA is bound by residues A364, 370-371 (NY), S389, A407, and R424.

It in the N-terminal section; belongs to the N-acetylglucosamine-1-phosphate uridyltransferase family. In the C-terminal section; belongs to the transferase hexapeptide repeat family. In terms of assembly, homotrimer. It depends on Mg(2+) as a cofactor.

It is found in the cytoplasm. The enzyme catalyses alpha-D-glucosamine 1-phosphate + acetyl-CoA = N-acetyl-alpha-D-glucosamine 1-phosphate + CoA + H(+). It catalyses the reaction N-acetyl-alpha-D-glucosamine 1-phosphate + UTP + H(+) = UDP-N-acetyl-alpha-D-glucosamine + diphosphate. It functions in the pathway nucleotide-sugar biosynthesis; UDP-N-acetyl-alpha-D-glucosamine biosynthesis; N-acetyl-alpha-D-glucosamine 1-phosphate from alpha-D-glucosamine 6-phosphate (route II): step 2/2. It participates in nucleotide-sugar biosynthesis; UDP-N-acetyl-alpha-D-glucosamine biosynthesis; UDP-N-acetyl-alpha-D-glucosamine from N-acetyl-alpha-D-glucosamine 1-phosphate: step 1/1. The protein operates within bacterial outer membrane biogenesis; LPS lipid A biosynthesis. Functionally, catalyzes the last two sequential reactions in the de novo biosynthetic pathway for UDP-N-acetylglucosamine (UDP-GlcNAc). The C-terminal domain catalyzes the transfer of acetyl group from acetyl coenzyme A to glucosamine-1-phosphate (GlcN-1-P) to produce N-acetylglucosamine-1-phosphate (GlcNAc-1-P), which is converted into UDP-GlcNAc by the transfer of uridine 5-monophosphate (from uridine 5-triphosphate), a reaction catalyzed by the N-terminal domain. In Paramagnetospirillum magneticum (strain ATCC 700264 / AMB-1) (Magnetospirillum magneticum), this protein is Bifunctional protein GlmU.